The chain runs to 375 residues: Phytanoyl-CoA hydroxylase-interacting protein-like (375 aa).

Residues Ser-11, Ser-12, and Ser-15 each carry the phosphoserine modification. N-linked (GlcNAc...) asparagine glycosylation is present at Asn-22. Position 24 is a phosphoserine (Ser-24). A glycan (N-linked (GlcNAc...) asparagine) is linked at Asn-36. Positions 51 to 160 (VPHNIKINNI…EIIEFCTADY (110 aa)) constitute a Fibronectin type-III domain.

It belongs to the PHYHIP family.

In terms of biological role, may play a role in the development of the central system. The protein is Phytanoyl-CoA hydroxylase-interacting protein-like (Phyhipl) of Rattus norvegicus (Rat).